The sequence spans 252 residues: Diphthine synthase (252 aa).

S-adenosyl-L-methionine contacts are provided by residues Leu-9, Asp-85, Val-88, 113 to 114 (SI), Leu-165, Ala-202, and His-227.

The protein belongs to the diphthine synthase family. As to quaternary structure, homodimer.

It catalyses the reaction 2-[(3S)-amino-3-carboxypropyl]-L-histidyl-[translation elongation factor 2] + 3 S-adenosyl-L-methionine = diphthine-[translation elongation factor 2] + 3 S-adenosyl-L-homocysteine + 3 H(+). The protein operates within protein modification; peptidyl-diphthamide biosynthesis. S-adenosyl-L-methionine-dependent methyltransferase that catalyzes the trimethylation of the amino group of the modified target histidine residue in translation elongation factor 2 (EF-2), to form an intermediate called diphthine. The three successive methylation reactions represent the second step of diphthamide biosynthesis. The protein is Diphthine synthase of Methanospirillum hungatei JF-1 (strain ATCC 27890 / DSM 864 / NBRC 100397 / JF-1).